Here is a 122-residue protein sequence, read N- to C-terminus: UPF0145 protein TV0671 (122 aa).

Belongs to the UPF0145 family.

This chain is UPF0145 protein TV0671, found in Thermoplasma volcanium (strain ATCC 51530 / DSM 4299 / JCM 9571 / NBRC 15438 / GSS1).